The chain runs to 290 residues: tRNA-cytidine(32) 2-sulfurtransferase (290 aa).

Positions 36 to 41 (SGGKDS) match the PP-loop motif motif. Positions 111, 114, and 202 each coordinate [4Fe-4S] cluster. The interval 259-290 (DPWLDAEDEEAEDCGEPAGDGVVSLGGARGGR) is disordered. A compositionally biased stretch (acidic residues) spans 262–273 (LDAEDEEAEDCG).

This sequence belongs to the TtcA family. Homodimer. Mg(2+) serves as cofactor. It depends on [4Fe-4S] cluster as a cofactor.

It is found in the cytoplasm. The catalysed reaction is cytidine(32) in tRNA + S-sulfanyl-L-cysteinyl-[cysteine desulfurase] + AH2 + ATP = 2-thiocytidine(32) in tRNA + L-cysteinyl-[cysteine desulfurase] + A + AMP + diphosphate + H(+). The protein operates within tRNA modification. In terms of biological role, catalyzes the ATP-dependent 2-thiolation of cytidine in position 32 of tRNA, to form 2-thiocytidine (s(2)C32). The sulfur atoms are provided by the cysteine/cysteine desulfurase (IscS) system. This is tRNA-cytidine(32) 2-sulfurtransferase from Anaeromyxobacter dehalogenans (strain 2CP-C).